Consider the following 234-residue polypeptide: UPF0173 metal-dependent hydrolase RHECIAT_CH0001941 (234 aa).

The protein belongs to the UPF0173 family.

In Rhizobium etli (strain CIAT 652), this protein is UPF0173 metal-dependent hydrolase RHECIAT_CH0001941.